A 345-amino-acid polypeptide reads, in one-letter code: NADPH dehydrogenase (345 aa).

23–26 (SPMC) contributes to the FMN binding site. Y28 contacts substrate. The FMN site is built by A60 and Q102. 164–167 (HGAH) provides a ligand contact to substrate. FMN contacts are provided by residues R215 and 307-308 (GR).

This sequence belongs to the NADH:flavin oxidoreductase/NADH oxidase family. NamA subfamily. In terms of assembly, homotetramer. It depends on FMN as a cofactor.

The catalysed reaction is A + NADPH + H(+) = AH2 + NADP(+). Catalyzes the reduction of the double bond of an array of alpha,beta-unsaturated aldehydes and ketones. It also reduces the nitro group of nitroester and nitroaromatic compounds. It could have a role in detoxification processes. The chain is NADPH dehydrogenase from Bacillus mycoides (strain KBAB4) (Bacillus weihenstephanensis).